A 285-amino-acid chain; its full sequence is ATP phosphoribosyltransferase (285 aa).

It belongs to the ATP phosphoribosyltransferase family. Long subfamily. Mg(2+) is required as a cofactor.

It localises to the cytoplasm. The catalysed reaction is 1-(5-phospho-beta-D-ribosyl)-ATP + diphosphate = 5-phospho-alpha-D-ribose 1-diphosphate + ATP. Its pathway is amino-acid biosynthesis; L-histidine biosynthesis; L-histidine from 5-phospho-alpha-D-ribose 1-diphosphate: step 1/9. Feedback inhibited by histidine. Its function is as follows. Catalyzes the condensation of ATP and 5-phosphoribose 1-diphosphate to form N'-(5'-phosphoribosyl)-ATP (PR-ATP). Has a crucial role in the pathway because the rate of histidine biosynthesis seems to be controlled primarily by regulation of HisG enzymatic activity. The polypeptide is ATP phosphoribosyltransferase (Streptomyces coelicolor (strain ATCC BAA-471 / A3(2) / M145)).